A 366-amino-acid chain; its full sequence is Alanine racemase (366 aa).

K35 serves as the catalytic Proton acceptor; specific for D-alanine. The residue at position 35 (K35) is an N6-(pyridoxal phosphate)lysine. R130 is a substrate binding site. The Proton acceptor; specific for L-alanine role is filled by Y254. M302 is a substrate binding site.

It belongs to the alanine racemase family. Pyridoxal 5'-phosphate serves as cofactor.

It carries out the reaction L-alanine = D-alanine. It participates in amino-acid biosynthesis; D-alanine biosynthesis; D-alanine from L-alanine: step 1/1. Catalyzes the interconversion of L-alanine and D-alanine. May also act on other amino acids. In Variovorax paradoxus (strain S110), this protein is Alanine racemase (alr).